A 353-amino-acid chain; its full sequence is Serine/threonine-protein phosphatase 2A activator 1 (353 aa).

The tract at residues 331–353 is disordered; that stretch reads ANNATTKMPPPLSTSTSRFIHRR. Polar residues predominate over residues 343-353; that stretch reads STSTSRFIHRR.

It belongs to the PTPA-type PPIase family.

The protein localises to the cytoplasm. It is found in the nucleus. It carries out the reaction [protein]-peptidylproline (omega=180) = [protein]-peptidylproline (omega=0). Its function is as follows. PPIases accelerate the folding of proteins. It catalyzes the cis-trans isomerization of proline imidic peptide bonds in oligopeptides. Acts as a regulatory subunit for PP2A-like phosphatases modulating their activity or substrate specificity, probably by inducing a conformational change in the catalytic subunit, a direct target of the PPIase. Can reactivate inactive phosphatase PP2A-phosphatase methylesterase complexes (PP2Ai) in presence of ATP and Mg(2+) by dissociating the inactive form from the complex. The chain is Serine/threonine-protein phosphatase 2A activator 1 (RRD1) from Kluyveromyces lactis (strain ATCC 8585 / CBS 2359 / DSM 70799 / NBRC 1267 / NRRL Y-1140 / WM37) (Yeast).